The primary structure comprises 282 residues: NADPH-dependent 7-cyano-7-deazaguanine reductase (282 aa).

88–90 (IES) contacts substrate. 90–91 (SK) is an NADPH binding site. The active-site Thioimide intermediate is the Cys190. Catalysis depends on Asp197, which acts as the Proton donor. 229–230 (HE) is a substrate binding site. 258–259 (RG) lines the NADPH pocket.

This sequence belongs to the GTP cyclohydrolase I family. QueF type 2 subfamily. Homodimer.

It localises to the cytoplasm. The enzyme catalyses 7-aminomethyl-7-carbaguanine + 2 NADP(+) = 7-cyano-7-deazaguanine + 2 NADPH + 3 H(+). It participates in tRNA modification; tRNA-queuosine biosynthesis. Functionally, catalyzes the NADPH-dependent reduction of 7-cyano-7-deazaguanine (preQ0) to 7-aminomethyl-7-deazaguanine (preQ1). This chain is NADPH-dependent 7-cyano-7-deazaguanine reductase, found in Escherichia coli O157:H7.